A 130-amino-acid chain; its full sequence is DNA-directed RNA polymerase subunit omega (130 aa).

A disordered region spans residues 108-130; that stretch reads TEEELLKGLEGLAPPEEQPEEDE.

It belongs to the RNA polymerase subunit omega family. As to quaternary structure, the RNAP catalytic core consists of 2 alpha, 1 beta, 1 beta' and 1 omega subunit. When a sigma factor is associated with the core the holoenzyme is formed, which can initiate transcription.

It carries out the reaction RNA(n) + a ribonucleoside 5'-triphosphate = RNA(n+1) + diphosphate. Its function is as follows. Promotes RNA polymerase assembly. Latches the N- and C-terminal regions of the beta' subunit thereby facilitating its interaction with the beta and alpha subunits. This chain is DNA-directed RNA polymerase subunit omega, found in Rhodopseudomonas palustris (strain ATCC BAA-98 / CGA009).